Consider the following 284-residue polypeptide: Nucleotide-binding protein in ptsO 5'region (284 aa).

8-15 serves as a coordination point for ATP; it reads GRSGSGKS. 60-63 provides a ligand contact to GTP; that stretch reads DARN.

Belongs to the RapZ-like family.

Displays ATPase and GTPase activities. In Pseudomonas putida (Arthrobacter siderocapsulatus), this protein is Nucleotide-binding protein in ptsO 5'region.